The sequence spans 175 residues: Interferon a3 (175 aa).

Positions 1 to 23 are cleaved as a signal peptide; that stretch reads MYTMQSWSCIFLIICSMQSVCHC. A disulfide bridge links Cys24 with Cys120.

Belongs to the alpha/beta interferon family. As to expression, isoform 1 and isoform 2 are expressed in several tissues, including gill, spleen, intestine, kidney and skin.

It is found in the secreted. It localises to the cytoplasm. Its subcellular location is the cytosol. Its function is as follows. Key player in antiviral response. Induces expression of TLRs, including that of TLR3, TLR9 and TLR8a1, and that of cytosolic pattern recognition receptors, including RIGI, IFIH1/MDA5 and DHX58/LGP2. Also induces MX1 and its own expression. In the presence of intracellular IFNAR2 (iIFNAR2) and IFNAR1B, intracellular isoform 3 may mediate STAT1 and STAT2 phosphorylation and induction of EIF2AK2, MX1 and RSAD2. The sequence is that of Interferon a3 from Oncorhynchus mykiss (Rainbow trout).